A 365-amino-acid polypeptide reads, in one-letter code: Phosphate acyltransferase (365 aa).

This sequence belongs to the PlsX family. In terms of assembly, homodimer. Probably interacts with PlsY.

It localises to the cytoplasm. It carries out the reaction a fatty acyl-[ACP] + phosphate = an acyl phosphate + holo-[ACP]. Its pathway is lipid metabolism; phospholipid metabolism. Functionally, catalyzes the reversible formation of acyl-phosphate (acyl-PO(4)) from acyl-[acyl-carrier-protein] (acyl-ACP). This enzyme utilizes acyl-ACP as fatty acyl donor, but not acyl-CoA. In Picosynechococcus sp. (strain ATCC 27264 / PCC 7002 / PR-6) (Agmenellum quadruplicatum), this protein is Phosphate acyltransferase.